Reading from the N-terminus, the 437-residue chain is Probable D-serine dehydratase (437 aa).

Residue K106 is modified to N6-(pyridoxal phosphate)lysine.

Belongs to the serine/threonine dehydratase family. DsdA subfamily. Requires pyridoxal 5'-phosphate as cofactor.

It carries out the reaction D-serine = pyruvate + NH4(+). The polypeptide is Probable D-serine dehydratase (Hahella chejuensis (strain KCTC 2396)).